Consider the following 248-residue polypeptide: 14-3-3 protein sigma (248 aa).

Phosphoserine occurs at positions 5, 74, and 248.

This sequence belongs to the 14-3-3 family. Homodimer. Interacts with KRT17 and SAMSN1. Found in a complex with XPO7, EIF4A1, ARHGAP1, VPS26A, VPS29 and VPS35. Interacts with GAB2. Interacts with SRPK2. Interacts with COPS6. Interacts with COP1; this interaction leads to proteasomal degradation. Interacts with the 'Thr-369' phosphorylated form of DAPK2. Interacts with PI4KB. Interacts with SLITRK1. Interacts with LRRK2; this interaction is dependent on LRRK2 phosphorylation. Interacts with PKP3 (via N-terminus); the interaction maintains the cytoplasmic pool of PKP3, facilitates PKP3 exchange at desmosomes and restricts PKP3 localization to existing desmosome cell junctions. Interacts with LCP2. In terms of processing, ubiquitinated. Ubiquitination by RFFL induces proteasomal degradation and indirectly regulates p53/TP53 activation.

Its subcellular location is the cytoplasm. The protein resides in the nucleus. It localises to the secreted. Adapter protein implicated in the regulation of a large spectrum of both general and specialized signaling pathways. Binds to a large number of partners, usually by recognition of a phosphoserine or phosphothreonine motif. Binding generally results in the modulation of the activity of the binding partner. Promotes cytosolic retention of GBP1 GTPase by binding to phosphorylated GBP1, thereby inhibiting the innate immune response. Also acts as a TP53/p53-regulated inhibitor of G2/M progression. When bound to KRT17, regulates protein synthesis and epithelial cell growth by stimulating Akt/mTOR pathway. Acts to maintain desmosome cell junction adhesion in epithelial cells via interacting with and sequestering PKP3 to the cytoplasm, thereby restricting its translocation to existing desmosome structures and therefore maintaining desmosome protein homeostasis. Also acts to facilitate PKP3 exchange at desmosome plaques, thereby maintaining keratinocyte intercellular adhesion. May also regulate MDM2 autoubiquitination and degradation and thereby activate p53/TP53. The polypeptide is 14-3-3 protein sigma (SFN) (Bos taurus (Bovine)).